The primary structure comprises 278 residues: Shikimate dehydrogenase (NADP(+)) (278 aa).

Shikimate is bound by residues 19 to 21 and Thr-66; that span reads SRS. The active-site Proton acceptor is Lys-70. Residues Asn-91 and Asp-106 each contribute to the shikimate site. NADP(+) is bound by residues 129 to 133 and Phe-221; that span reads GAGGA. Tyr-223 contacts shikimate. Gly-242 contributes to the NADP(+) binding site.

It belongs to the shikimate dehydrogenase family. As to quaternary structure, homodimer.

The enzyme catalyses shikimate + NADP(+) = 3-dehydroshikimate + NADPH + H(+). Its pathway is metabolic intermediate biosynthesis; chorismate biosynthesis; chorismate from D-erythrose 4-phosphate and phosphoenolpyruvate: step 4/7. In terms of biological role, involved in the biosynthesis of the chorismate, which leads to the biosynthesis of aromatic amino acids. Catalyzes the reversible NADPH linked reduction of 3-dehydroshikimate (DHSA) to yield shikimate (SA). This is Shikimate dehydrogenase (NADP(+)) from Anaeromyxobacter dehalogenans (strain 2CP-C).